The chain runs to 365 residues: Phosphoserine aminotransferase (365 aa).

Residue Arg-42 coordinates L-glutamate. Residues 76–77, Trp-102, Thr-156, Asp-175, and Gln-198 contribute to the pyridoxal 5'-phosphate site; that span reads GR. Lys-199 is subject to N6-(pyridoxal phosphate)lysine. Position 240 to 241 (240 to 241) interacts with pyridoxal 5'-phosphate; sequence NT.

It belongs to the class-V pyridoxal-phosphate-dependent aminotransferase family. SerC subfamily. Homodimer. It depends on pyridoxal 5'-phosphate as a cofactor.

The protein resides in the cytoplasm. The catalysed reaction is O-phospho-L-serine + 2-oxoglutarate = 3-phosphooxypyruvate + L-glutamate. It catalyses the reaction 4-(phosphooxy)-L-threonine + 2-oxoglutarate = (R)-3-hydroxy-2-oxo-4-phosphooxybutanoate + L-glutamate. It participates in amino-acid biosynthesis; L-serine biosynthesis; L-serine from 3-phospho-D-glycerate: step 2/3. Its pathway is cofactor biosynthesis; pyridoxine 5'-phosphate biosynthesis; pyridoxine 5'-phosphate from D-erythrose 4-phosphate: step 3/5. Its function is as follows. Catalyzes the reversible conversion of 3-phosphohydroxypyruvate to phosphoserine and of 3-hydroxy-2-oxo-4-phosphonooxybutanoate to phosphohydroxythreonine. This Shewanella oneidensis (strain ATCC 700550 / JCM 31522 / CIP 106686 / LMG 19005 / NCIMB 14063 / MR-1) protein is Phosphoserine aminotransferase.